The primary structure comprises 122 residues: Lithostathine (122 aa).

The N-terminal stretch at 1-26 (MLPSMSLPSLXWMLLSCLMLLSQVQG) is a signal peptide. Positions 27–37 (EDSPADTPSAR) are excised as a propeptide. Residues 38–122 (ISCPKGSMAY…LEPNAGGWEW (85 aa)) form the C-type lectin domain. A disulfide bond links Cys40 and Cys51.

In terms of assembly, cleaved to give an A chain and a B chain joined by a disulfide bond. As to expression, in pancreatic acinar cells.

Its subcellular location is the secreted. Might act as an inhibitor of spontaneous calcium carbonate precipitation. In Sus scrofa (Pig), this protein is Lithostathine (PTP).